Reading from the N-terminus, the 252-residue chain is Uridylate kinase (252 aa).

Residue 24–27 (KLSG) coordinates ATP. The interval 32–37 (GEEGFG) is involved in allosteric activation by GTP. Residue Gly66 participates in UMP binding. 2 residues coordinate ATP: Gly67 and Arg71. Residues Asp86 and 147–154 (TGNPFFTT) each bind UMP. Positions 174, 180, and 183 each coordinate ATP.

It belongs to the UMP kinase family. As to quaternary structure, homohexamer.

The protein localises to the cytoplasm. It carries out the reaction UMP + ATP = UDP + ADP. It functions in the pathway pyrimidine metabolism; CTP biosynthesis via de novo pathway; UDP from UMP (UMPK route): step 1/1. Its activity is regulated as follows. Allosterically activated by GTP. Inhibited by UTP. Catalyzes the reversible phosphorylation of UMP to UDP. This Alcanivorax borkumensis (strain ATCC 700651 / DSM 11573 / NCIMB 13689 / SK2) protein is Uridylate kinase.